Reading from the N-terminus, the 159-residue chain is 2-C-methyl-D-erythritol 2,4-cyclodiphosphate synthase (159 aa).

A divalent metal cation contacts are provided by D8 and H10. Residues 8 to 10 and 34 to 35 each bind 4-CDP-2-C-methyl-D-erythritol 2-phosphate; these read DVH and HS. H42 serves as a coordination point for a divalent metal cation. 4-CDP-2-C-methyl-D-erythritol 2-phosphate contacts are provided by residues 56 to 58, 61 to 65, 100 to 106, 132 to 135, F139, and R142; these read DIG, FPDTD, AQAPKML, and TTTE.

Belongs to the IspF family. As to quaternary structure, homotrimer. The cofactor is a divalent metal cation.

It carries out the reaction 4-CDP-2-C-methyl-D-erythritol 2-phosphate = 2-C-methyl-D-erythritol 2,4-cyclic diphosphate + CMP. It participates in isoprenoid biosynthesis; isopentenyl diphosphate biosynthesis via DXP pathway; isopentenyl diphosphate from 1-deoxy-D-xylulose 5-phosphate: step 4/6. Its function is as follows. Involved in the biosynthesis of isopentenyl diphosphate (IPP) and dimethylallyl diphosphate (DMAPP), two major building blocks of isoprenoid compounds. Catalyzes the conversion of 4-diphosphocytidyl-2-C-methyl-D-erythritol 2-phosphate (CDP-ME2P) to 2-C-methyl-D-erythritol 2,4-cyclodiphosphate (ME-CPP) with a corresponding release of cytidine 5-monophosphate (CMP). The sequence is that of 2-C-methyl-D-erythritol 2,4-cyclodiphosphate synthase from Salmonella choleraesuis (strain SC-B67).